Consider the following 243-residue polypeptide: Anti-H(O) lectin 1 (243 aa).

N-linked (GlcNAc...) asparagine; partial glycosylation is present at Asn-10. Residue Asn-116 is glycosylated (N-linked (GlcNAc...) asparagine). 2 residues coordinate Mn(2+): Glu-126 and Asp-128. Ca(2+) contacts are provided by Asp-128, Asn-135, and Asp-138. Residues Asp-138 and His-143 each coordinate Mn(2+).

It belongs to the leguminous lectin family.

In terms of biological role, L-fucose specific lectin. This is Anti-H(O) lectin 1 from Ulex europaeus (Furze).